The sequence spans 451 residues: Secreted RxLR effector protein 70 (451 aa).

A signal peptide spans 1 to 17; sequence MRGAYYIITALLVVASS. Residues 48–65 carry the RxLR-dEER motif; it reads RFLRESRDVHDDLANEER. The tract at residues 303 to 336 is disordered; the sequence is DAPSNSKHTLGGNKDSSSATTLHKHSKGLSSRPF. The segment covering 305–323 has biased composition (polar residues); sequence PSNSKHTLGGNKDSSSATT.

It belongs to the RxLR effector family.

It is found in the secreted. The protein resides in the host nucleus. Functionally, secreted effector that completely suppresses the host cell death induced by cell death-inducing proteins. This chain is Secreted RxLR effector protein 70, found in Plasmopara viticola (Downy mildew of grapevine).